Here is a 327-residue protein sequence, read N- to C-terminus: D-alanine--D-alanine ligase (327 aa).

Residues 113–312 form the ATP-grasp domain; that stretch reads KRLWMTHGLA…YEDFVMQVLA (200 aa). Position 139-194 (139-194) interacts with ATP; sequence VADLGLPLIVKPAREGSSIGLTKVIAADQMRAAFEKAAGLDADVIAETFIDGAELT. 3 residues coordinate Mg(2+): Asp-266, Glu-279, and Asn-281.

Belongs to the D-alanine--D-alanine ligase family. Mg(2+) serves as cofactor. Requires Mn(2+) as cofactor.

It localises to the cytoplasm. It catalyses the reaction 2 D-alanine + ATP = D-alanyl-D-alanine + ADP + phosphate + H(+). It participates in cell wall biogenesis; peptidoglycan biosynthesis. In terms of biological role, cell wall formation. The protein is D-alanine--D-alanine ligase of Cupriavidus metallidurans (strain ATCC 43123 / DSM 2839 / NBRC 102507 / CH34) (Ralstonia metallidurans).